The sequence spans 238 residues: Ribonuclease PH (238 aa).

Phosphate-binding positions include R86 and 124 to 126 (GTR).

This sequence belongs to the RNase PH family. In terms of assembly, homohexameric ring arranged as a trimer of dimers.

The enzyme catalyses tRNA(n+1) + phosphate = tRNA(n) + a ribonucleoside 5'-diphosphate. Functionally, phosphorolytic 3'-5' exoribonuclease that plays an important role in tRNA 3'-end maturation. Removes nucleotide residues following the 3'-CCA terminus of tRNAs; can also add nucleotides to the ends of RNA molecules by using nucleoside diphosphates as substrates, but this may not be physiologically important. Probably plays a role in initiation of 16S rRNA degradation (leading to ribosome degradation) during starvation. This chain is Ribonuclease PH, found in Alkalilimnicola ehrlichii (strain ATCC BAA-1101 / DSM 17681 / MLHE-1).